A 208-amino-acid polypeptide reads, in one-letter code: Recombination protein RecR (208 aa).

The C4-type zinc finger occupies 60-75 (CKVCHNICDDEVCSIC). Positions 83–178 (SLVCVVENIK…RISVIARGVS (96 aa)) constitute a Toprim domain.

It belongs to the RecR family.

Functionally, may play a role in DNA repair. It seems to be involved in an RecBC-independent recombinational process of DNA repair. It may act with RecF and RecO. This is Recombination protein RecR from Parabacteroides distasonis (strain ATCC 8503 / DSM 20701 / CIP 104284 / JCM 5825 / NCTC 11152).